The primary structure comprises 469 residues: MIAFLFYKCFAKNYKINFLYKNSSYINTNTLWLKVIYIKTKDVIIFLLLFFVAFNVSSAYVIKNLNIDCIVTPDDTINETISFVIYNNEDKNLSHISYTIPQTIRNFTINASAGVKGYSALYNEGVTEIAIEFEKPIPKGGYTNITINCFVNDAIWTKNGIKQLILSFPITSKNATIKIVLPPGAVILSPQGTLLVTPSGYKITTDGKHQIIVWDLSLNKEITFTITVKYTFISYPGQNIIEQPAINNNLKYLLIIAIFGTAIFGGLFVKEKISKRKIIERTKNIKNELTSLKNKLKEKEEEIKNLAIKIKDLEDKLSKANKNLLNKDEIISVLNERISEYESQIQKLLDENIIYKEKIESLNKYIETLKKENDKLKDKVRELSDIAKKYMEEKRGVLWSFLTEDEKIIIDLIKKHGHITQKEIVEITGMSKPKVSRIISELEDRKIIRKEKIGRINKLTLTEESKKLL.

Helical transmembrane passes span D42–I62, I179–S199, and N249–V269.

The protein localises to the cell membrane. This is an uncharacterized protein from Methanocaldococcus jannaschii (strain ATCC 43067 / DSM 2661 / JAL-1 / JCM 10045 / NBRC 100440) (Methanococcus jannaschii).